The following is a 344-amino-acid chain: Methionine import ATP-binding protein MetN (344 aa).

The ABC transporter domain maps to 2–241 (IELKNIGKQF…PTTQLAQQFI (240 aa)). ATP is bound at residue 38-45 (GASGAGKS).

It belongs to the ABC transporter superfamily. Methionine importer (TC 3.A.1.24) family. The complex is composed of two ATP-binding proteins (MetN), two transmembrane proteins (MetI) and a solute-binding protein (MetQ).

The protein resides in the cell inner membrane. The catalysed reaction is L-methionine(out) + ATP + H2O = L-methionine(in) + ADP + phosphate + H(+). The enzyme catalyses D-methionine(out) + ATP + H2O = D-methionine(in) + ADP + phosphate + H(+). Functionally, part of the ABC transporter complex MetNIQ involved in methionine import. Responsible for energy coupling to the transport system. The protein is Methionine import ATP-binding protein MetN of Haemophilus ducreyi (strain 35000HP / ATCC 700724).